We begin with the raw amino-acid sequence, 327 residues long: Phospho-N-acetylmuramoyl-pentapeptide-transferase (327 aa).

Helical transmembrane passes span 3–23, 51–71, 79–99, 115–135, 140–160, 172–192, 197–217, 223–243, 248–268, and 306–326; these read TAII…PAFI, TMGG…IALF, VTTI…DDFL, LFLQ…HGGG, VFGF…FWLV, IDGL…VIAL, FDLL…FGFN, IFMG…LSIA, WTLL…MLQV, and VDFL…AILY.

Belongs to the glycosyltransferase 4 family. MraY subfamily. It depends on Mg(2+) as a cofactor.

It is found in the cell membrane. It carries out the reaction UDP-N-acetyl-alpha-D-muramoyl-L-alanyl-gamma-D-glutamyl-L-lysyl-D-alanyl-D-alanine + di-trans,octa-cis-undecaprenyl phosphate = Mur2Ac(oyl-L-Ala-gamma-D-Glu-L-Lys-D-Ala-D-Ala)-di-trans,octa-cis-undecaprenyl diphosphate + UMP. It participates in cell wall biogenesis; peptidoglycan biosynthesis. Catalyzes the initial step of the lipid cycle reactions in the biosynthesis of the cell wall peptidoglycan: transfers peptidoglycan precursor phospho-MurNAc-pentapeptide from UDP-MurNAc-pentapeptide onto the lipid carrier undecaprenyl phosphate, yielding undecaprenyl-pyrophosphoryl-MurNAc-pentapeptide, known as lipid I. The polypeptide is Phospho-N-acetylmuramoyl-pentapeptide-transferase (Streptococcus gordonii (strain Challis / ATCC 35105 / BCRC 15272 / CH1 / DL1 / V288)).